Reading from the N-terminus, the 378-residue chain is Acetylornithine deacetylase (378 aa).

Histidine 76 contributes to the Zn(2+) binding site. Aspartate 78 is a catalytic residue. Zn(2+) is bound at residue aspartate 108. Residue glutamate 140 is part of the active site. Residues glutamate 141, glutamate 165, and histidine 351 each contribute to the Zn(2+) site.

Belongs to the peptidase M20A family. ArgE subfamily. In terms of assembly, homodimer. The cofactor is Zn(2+). Co(2+) serves as cofactor. Glutathione is required as a cofactor.

The protein localises to the cytoplasm. The enzyme catalyses N(2)-acetyl-L-ornithine + H2O = L-ornithine + acetate. The protein operates within amino-acid biosynthesis; L-arginine biosynthesis; L-ornithine from N(2)-acetyl-L-ornithine (linear): step 1/1. In terms of biological role, catalyzes the hydrolysis of the amide bond of N(2)-acetylated L-amino acids. Cleaves the acetyl group from N-acetyl-L-ornithine to form L-ornithine, an intermediate in L-arginine biosynthesis pathway, and a branchpoint in the synthesis of polyamines. In Aliivibrio fischeri (strain MJ11) (Vibrio fischeri), this protein is Acetylornithine deacetylase.